The sequence spans 1401 residues: Protein dispatched homolog 2 (1401 aa).

2 disordered regions span residues 1–91 and 113–138; these read MDGD…LAPA and DRAA…GTWK. Residues 170 to 190 form a helical membrane-spanning segment; it reads VAVLMLCLAVIFLCTLAGLLG. Asn239 carries N-linked (GlcNAc...) asparagine glycosylation. The tract at residues 241–264 is disordered; sequence SSSHNTLRPAPRGSAQESAVRPRR. 2 N-linked (GlcNAc...) asparagine glycosylation sites follow: Asn349 and Asn465. The region spanning 471 to 643 is the SSD domain; the sequence is GMDLGLKQEL…LVWLPASAVL (173 aa). Transmembrane regions (helical) follow at residues 484-504, 510-530, 542-562, 589-609, 617-637, 704-724, 964-984, 990-1010, 1019-1039, 1064-1084, and 1088-1108; these read FLVQ…FGMA, LFLT…AFFL, FVNL…TLIF, FGYL…ASYL, CLAL…LVWL, YIWI…AGVS, PAVV…LGTW, LFSV…LVLL, ALFL…YCIS, AVGA…TVLL, and LGII…FFFQ. Disordered stretches follow at residues 1169–1192, 1229–1337, and 1352–1401; these read ARRR…PSVL, PALQ…NGKR, and SLPA…GYSS. Over residues 1175–1184 the composition is skewed to polar residues; sequence SFDTSTATSK. The segment covering 1259-1270 has biased composition (low complexity); it reads PLPASPEAPAHS. Over residues 1284–1305 the composition is skewed to polar residues; that stretch reads SSASTLEGLSVSDETCLSTSEP. The span at 1352–1362 shows a compositional bias: low complexity; the sequence is SLPASHHSSLS. The residue at position 1366 (Arg1366) is an Omega-N-methylarginine.

Belongs to the dispatched family.

It is found in the membrane. The chain is Protein dispatched homolog 2 from Homo sapiens (Human).